The following is an 85-amino-acid chain: uncharacterized protein (85 aa).

Disordered stretches follow at residues 1–28 and 35–54; these read MPQKPLKVTKKAKDPRRVTKKQKNLRKA and SKKKSLQHLKKLKKSSSLTE. A compositionally biased stretch (basic residues) spans 35–48; it reads SKKKSLQHLKKLKK.

Its subcellular location is the nucleus. This is an uncharacterized protein from Saccharomyces cerevisiae (strain ATCC 204508 / S288c) (Baker's yeast).